Consider the following 179-residue polypeptide: MTSRLQVIQGDITQLSVDAIVNAANASLMGGGGVDGAIHRAAGPALLDACKLIRQQQGECQTGHAVITPAGKLSAKAVIHTVGPVWRGGEHQEAELLEEAYRSCLLLAEANHFRSIAFPAISTGVYGYPRAQAAEVAVRTVSDFITRYALPEQVYFVCYDEETARLYARLLTQQGDDPA.

One can recognise a Macro domain in the interval 1-175 (MTSRLQVIQG…LYARLLTQQG (175 aa)). Substrate-binding positions include 11-12 (DI), N25, 33-35 (GVD), and 122-126 (STGVY). D35 (proton acceptor) is an active-site residue.

Belongs to the MacroD-type family. YmdB subfamily. As to quaternary structure, homodimer. Interacts with RNase III.

The catalysed reaction is 3''-O-acetyl-ADP-D-ribose + H2O = ADP-D-ribose + acetate + H(+). It catalyses the reaction 2''-O-acetyl-ADP-D-ribose + H2O = ADP-D-ribose + acetate + H(+). Its function is as follows. Deacetylates O-acetyl-ADP ribose to yield ADP-ribose and free acetate. Down-regulates ribonuclease 3 (RNase III) activity. Acts by interacting directly with the region of the ribonuclease that is required for dimerization/activation. In Salmonella gallinarum (strain 287/91 / NCTC 13346), this protein is O-acetyl-ADP-ribose deacetylase.